The primary structure comprises 404 residues: Cysteine desulfurase IscS (404 aa).

Pyridoxal 5'-phosphate contacts are provided by residues 75–76 (AT), N155, Q183, and 203–205 (SGH). K206 carries the post-translational modification N6-(pyridoxal phosphate)lysine. T243 is a pyridoxal 5'-phosphate binding site. C328 (cysteine persulfide intermediate) is an active-site residue. C328 provides a ligand contact to [2Fe-2S] cluster.

The protein belongs to the class-V pyridoxal-phosphate-dependent aminotransferase family. NifS/IscS subfamily. Homodimer. Forms a heterotetramer with IscU, interacts with other sulfur acceptors. It depends on pyridoxal 5'-phosphate as a cofactor.

The protein resides in the cytoplasm. The catalysed reaction is (sulfur carrier)-H + L-cysteine = (sulfur carrier)-SH + L-alanine. Its pathway is cofactor biosynthesis; iron-sulfur cluster biosynthesis. Functionally, master enzyme that delivers sulfur to a number of partners involved in Fe-S cluster assembly, tRNA modification or cofactor biosynthesis. Catalyzes the removal of elemental sulfur atoms from cysteine to produce alanine. Functions as a sulfur delivery protein for Fe-S cluster synthesis onto IscU, an Fe-S scaffold assembly protein, as well as other S acceptor proteins. The protein is Cysteine desulfurase IscS of Shewanella halifaxensis (strain HAW-EB4).